A 358-amino-acid polypeptide reads, in one-letter code: Pseudouridylate synthase RPUSD4, mitochondrial (358 aa).

The transit peptide at 1 to 12 (MRHAREVTFARL) directs the protein to the mitochondrion.

The protein belongs to the pseudouridine synthase RluA family.

It localises to the mitochondrion matrix. Its subcellular location is the nucleus. The protein localises to the cytoplasm. The catalysed reaction is uridine in 5S rRNA = pseudouridine in 5S rRNA. It catalyses the reaction a uridine in tRNA = a pseudouridine in tRNA. It carries out the reaction a uridine in mRNA = a pseudouridine in mRNA. In terms of biological role, catalyzes uridine to pseudouridine isomerization (pseudouridylation) of different mitochondrial RNA substrates. Acts on position 1397 in 16S mitochondrial ribosomal RNA (16S mt-rRNA). This modification is required for the assembly of 16S mt-rRNA into a functional mitochondrial ribosome. Acts on position 39 in mitochondrial tRNA(Phe). Also catalyzes pseudouridylation of mRNAs in nucleus: acts as a regulator of pre-mRNA splicing by mediating pseudouridylation of pre-mRNAs at locations associated with alternatively spliced regions. Pseudouridylation of pre-mRNAs near splice sites directly regulates mRNA splicing and mRNA 3'-end processing. In Danio rerio (Zebrafish), this protein is Pseudouridylate synthase RPUSD4, mitochondrial.